The primary structure comprises 309 residues: DnaJ protein ERDJ7 (309 aa).

The N-terminal stretch at 1–36 is a signal peptide; the sequence is MSQVGSAGEGSNSMAAAPPPRLLLLVVLLLVPVSNA. Over 37 to 130 the chain is Lumenal; it reads IYCEEDDCYD…YRAYYGHKTD (94 aa). One can recognise a J domain in the interval 43–107; that stretch reads DCYDLLGVKQ…STRGQYDYAI (65 aa). N-linked (GlcNAc...) asparagine glycosylation occurs at Asn-55. The chain crosses the membrane as a helical span at residues 131–151; that stretch reads PRAVLIGLLLIISAFQYLNQF. The Cytoplasmic portion of the chain corresponds to 152–219; sequence GRYSKAIETV…GVEKPSLWRL (68 aa). Residues 220–242 form a helical membrane-spanning segment; sequence YGVQFILLPYSIGKVLSWKFCWF. Residues 243 to 309 are Lumenal-facing; the sequence is WRYRIKKLPY…EMRKESKRRR (67 aa).

It localises to the endoplasmic reticulum membrane. Functionally, may play a role in protein folding in the endoplasmic reticulum. This chain is DnaJ protein ERDJ7, found in Oryza sativa subsp. japonica (Rice).